Reading from the N-terminus, the 104-residue chain is Large ribosomal subunit protein uL24 (104 aa).

This sequence belongs to the universal ribosomal protein uL24 family. In terms of assembly, part of the 50S ribosomal subunit.

Its function is as follows. One of two assembly initiator proteins, it binds directly to the 5'-end of the 23S rRNA, where it nucleates assembly of the 50S subunit. One of the proteins that surrounds the polypeptide exit tunnel on the outside of the subunit. The chain is Large ribosomal subunit protein uL24 from Pseudomonas syringae pv. syringae (strain B728a).